An 869-amino-acid polypeptide reads, in one-letter code: Speckle targeted PIP5K1A-regulated poly(A) polymerase (869 aa).

Residues 16 to 46 form a Matrin-type zinc finger; that stretch reads FRCCLCDVTTANRPSLDAHLKGRKHRDLVQL. Positions 56-128 constitute an RRM domain; sequence RSVFVSGFPR…HGLRVRPREQ (73 aa). The disordered stretch occupies residues 114 to 144; it reads HSLGGHGLRVRPREQKEFQSPASKSPKGVDS. S205 serves as a coordination point for ATP. 2 residues coordinate Mg(2+): D216 and D218. UTP is bound by residues D216 and D218. Disordered stretches follow at residues 226–247 and 259–335; these read MEETEPDPKAPKVPETSSLDSA and CTPA…ASKD. Composition is skewed to polar residues over residues 266 to 276 and 283 to 299; these read DSLSPTSVQES and TPSSLAPQTPDSALGSD. Basic and acidic residues predominate over residues 314–335; that stretch reads QEDRKEGKQGKELELAEEASKD. N395 contributes to the ATP binding site. UTP is bound by residues N395, R417, Y435, and H552. The PAP-associated domain maps to 494 to 552; sequence LSSLLAQFFSCVSCLDLSGSLLSLREGRPLMVAEGLPSDLWEGLRLGPMNLQDPFDLSH. The segment at 601–869 is KA1; binds the bulging loops of U6 snRNA but is dispensable for terminal uridylyltransferase activity; sequence SSPSSLLSAK…IPQALKNLLK (269 aa). Disordered regions lie at residues 640 to 689, 735 to 757, 775 to 796, and 803 to 822; these read QGTK…DHSE, MKPEVAGEGSQGETGKEASHPSS, ARRRLQQQTKEEGRGGPTTGAE, and RVTQELKGPNSEQERPPGEP. Residues 671–689 are compositionally biased toward basic and acidic residues; it reads KSFEEGKEEPQGCAGDHSE. A phosphoserine mark is found at S688 and S744.

This sequence belongs to the DNA polymerase type-B-like family. As to quaternary structure, associates with the cleavage and polyadenylation specificity factor (CPSF) complex. Interacts with CPSF1 and CPSF3; the interaction is direct. Interacts with PIP5K1A. The cofactor is Mg(2+). It depends on Mn(2+) as a cofactor. Post-translationally, phosphorylated by CK1 in the proline-rich (Pro-rich) region.

The protein localises to the nucleus. It localises to the nucleolus. Its subcellular location is the nucleus speckle. The catalysed reaction is RNA(n) + UTP = RNA(n)-3'-uridine ribonucleotide + diphosphate. It catalyses the reaction RNA(n) + ATP = RNA(n)-3'-adenine ribonucleotide + diphosphate. Adenylyltransferase activity is specifically phosphatidylinositol 4,5-bisphosphate (PtdIns(4,5)P2). Poly(A) polymerase that creates the 3'-poly(A) tail of specific pre-mRNAs. Localizes to nuclear speckles together with PIP5K1A and mediates polyadenylation of a select set of mRNAs, such as HMOX1. In addition to polyadenylation, it is also required for the 3'-end cleavage of pre-mRNAs: binds to the 3'UTR of targeted pre-mRNAs and promotes the recruitment and assembly of the CPSF complex on the 3'UTR of pre-mRNAs. In addition to adenylyltransferase activity, also has uridylyltransferase activity. However, the ATP ratio is higher than UTP in cells, suggesting that it functions primarily as a poly(A) polymerase. Acts as a specific terminal uridylyltransferase for U6 snRNA in vitro: responsible for a controlled elongation reaction that results in the restoration of the four 3'-terminal UMP-residues found in newly transcribed U6 snRNA. Not involved in replication-dependent histone mRNA degradation. This chain is Speckle targeted PIP5K1A-regulated poly(A) polymerase (Tut1), found in Mus musculus (Mouse).